A 104-amino-acid chain; its full sequence is L-rhamnose mutarotase (104 aa).

Tyr-18 is a binding site for substrate. His-22 serves as the catalytic Proton donor. Residues Tyr-41 and 76–77 (WW) contribute to the substrate site.

It belongs to the rhamnose mutarotase family. Homodimer.

It is found in the cytoplasm. It carries out the reaction alpha-L-rhamnose = beta-L-rhamnose. It functions in the pathway carbohydrate metabolism; L-rhamnose metabolism. Involved in the anomeric conversion of L-rhamnose. This chain is L-rhamnose mutarotase, found in Jannaschia sp. (strain CCS1).